A 520-amino-acid chain; its full sequence is Nucleobase-ascorbate transporter 1 (520 aa).

12 helical membrane-spanning segments follow: residues 36–56 (YILM…AMGG), 64–84 (VIQT…LFGT), 86–106 (LPAV…IIND), 129–149 (ALIV…WGLF), 150–170 (SRFF…LGMF), 174–194 (FPQL…VIGL), 213–233 (FPIL…TASG), 279–299 (FAMM…YIAA), 362–382 (GFMI…SIPV), 384–404 (IYAA…LSFL), 415–435 (LMIT…FAQY), and 453–473 (AFLN…AVFM).

It belongs to the nucleobase:cation symporter-2 (NCS2) (TC 2.A.40) family. In terms of tissue distribution, expressed in cotyledons 4 days after imbibition (DAI). Expressed in the minor and major veins of cotyledons and leaves, in the shoot apex and pedicels. Expressed in the root meristems, root tips and lateral root primordia.

It is found in the membrane. The protein is Nucleobase-ascorbate transporter 1 (NAT1) of Arabidopsis thaliana (Mouse-ear cress).